A 38-amino-acid polypeptide reads, in one-letter code: Toxic protein TimP (38 aa).

The hydrophobic stretch at 1-20 (MKVRCFCVVLLVSGTLCLHA) threads the membrane.

It belongs to the TimP toxin family.

Its subcellular location is the cell inner membrane. Functionally, toxic component of a probable type I toxin-antitoxin (TA) system. Neutralized by sRNA antitoxin TimR which binds to the 5' UTR of timP mRNA and inhibits translation. When TimP is expressed from its promoter in the absence of antitoxin leads to mild cell stress; overexpression in situ is toxic to the cell and causes membrane leakage. The antitoxin gene is encoded immediately upstream and transcribed divergently from the toxin gene; antitoxin RNA is less stable than timP mRNA. The polypeptide is Toxic protein TimP (Salmonella typhimurium (strain SL1344)).